We begin with the raw amino-acid sequence, 172 residues long: Endoribonuclease YbeY (172 aa).

Positions 1 to 21 are disordered; sequence MTLHVGAEPAPREDDTEDALR. Residues 10–21 show a composition bias toward basic and acidic residues; sequence APREDDTEDALR. Zn(2+)-binding residues include H134, H138, and H144.

It belongs to the endoribonuclease YbeY family. The cofactor is Zn(2+).

The protein localises to the cytoplasm. In terms of biological role, single strand-specific metallo-endoribonuclease involved in late-stage 70S ribosome quality control and in maturation of the 3' terminus of the 16S rRNA. This is Endoribonuclease YbeY from Burkholderia lata (strain ATCC 17760 / DSM 23089 / LMG 22485 / NCIMB 9086 / R18194 / 383).